The sequence spans 362 residues: CLIP domain-containing serine protease B10 (362 aa).

The signal sequence occupies residues 1 to 19 (MAKVVDCVLLLAFIAVVRG). The Clip domain occupies 22–75 (ACRTPDHRDGVCHPVQQCPSVRDEFFNSDRVLSEDEIDYLRKLQCKTKDVTICC). 3 disulfide bridges follow: Cys-23/Cys-74, Cys-33/Cys-66, and Cys-39/Cys-75. The Peptidase S1 domain maps to 110–361 (IIGGNYTAID…YLDWIRQNIR (252 aa)). Asn-114 carries N-linked (GlcNAc...) asparagine glycosylation. A disulfide bond links Cys-140 and Cys-156. Active-site charge relay system residues include His-155 and Asp-220. A glycan (N-linked (GlcNAc...) asparagine) is linked at Asn-254. Intrachain disulfides connect Cys-285–Cys-300 and Cys-310–Cys-337. Residue Ser-314 is the Charge relay system of the active site.

It belongs to the peptidase S1 family. CLIP subfamily. Forms a covalent heterodimer with SRPN2; the interaction inhibits CLIPB10 catalytic activity. Post-translationally, cleaved by an unknown protease into an active form.

Its subcellular location is the secreted. Its activity is regulated as follows. Inhibited by serpin SRPN2. Its function is as follows. Serine protease which preferentially cleaves after arginine residues. Involved in the innate immune response against parasite P.bergei infection by activating the melanization cascade. Probably in the hemolymph, cleaves and activates prophenoloxidase (PPO), which functions in the formation of pigments such as melanin and other polyphenolic compounds. In the susceptible strain G3, appears to be dispensable for ookinete elimination which occurs by lysis. The chain is CLIP domain-containing serine protease B10 from Anopheles gambiae (African malaria mosquito).